A 329-amino-acid chain; its full sequence is Homeobox protein ceh-40 (329 aa).

One can recognise a PBC domain in the interval 3–186 (EASKSIMDLL…VIQLKKRYLD (184 aa)). The tract at residues 10–90 (DLLSEVVKIT…EGVAGPDDSL (81 aa)) is PBC-A. Residues 93-186 (IQEAAGTDQY…VIQLKKRYLD (94 aa)) are PBC-B. The homeobox; TALE-type DNA-binding region spans 187–249 (ARRKRRNFSK…NKRIRYKKTM (63 aa)). The tract at residues 248-275 (TMAKNEDERRENRKPEDRPPPGAPGAPY) is disordered. The span at 250 to 266 (AKNEDERRENRKPEDRP) shows a compositional bias: basic and acidic residues.

This sequence belongs to the TALE/PBX homeobox family. Expressed in head dopaminergic neurons.

It is found in the nucleus. Plays a role in regulating gene expression in dopaminergic neurons, acting redundantly with homeobox protein ceh-20 in head neurons. May activate dopamine pathway genes in concert with ETS domain-containing protein ast-1, and homeobox proteins ceh-43 and ceh-20. This chain is Homeobox protein ceh-40 (ceh-40), found in Caenorhabditis elegans.